The following is a 409-amino-acid chain: Astacin-like metalloendopeptidase (409 aa).

Residues 1 to 19 (MDLKMLLIFTAFLLPAVLG) form the signal peptide. The propeptide occupies 20-86 (FPIQDNYENS…EGDIVPRRSR (67 aa)). A compositionally biased stretch (low complexity) spans 30 to 42 (TATSESTQVTTEE). The disordered stretch occupies residues 30–55 (TATSESTQVTTEESIYDSPSPTETDS). The region spanning 87 to 285 (SAFNCRNCYW…AKINKLYNCS (199 aa)) is the Peptidase M12A domain. Cystine bridges form between C91–C94, C134–C284, C155–C175, C287–C313, and C339–C362. H183 serves as a coordination point for Zn(2+). E184 is an active-site residue. Zn(2+) contacts are provided by H187 and H193. The region spanning 287–399 (CSTIIDAAFG…SGFQATFTSA (113 aa)) is the CUB domain.

The cofactor is Zn(2+).

It is found in the cytoplasm. The protein localises to the cell membrane. It localises to the cytoplasmic vesicle. Its subcellular location is the secretory vesicle. The protein resides in the cortical granule. Probable oocyte-specific oolemmal receptor involved in sperm and egg adhesion and fertilization. Protease which may play a role in the breaking down of the vitelline membrane (days 0-5) and possibly, in the digestion of the egg white (days 9-12). This Coturnix japonica (Japanese quail) protein is Astacin-like metalloendopeptidase.